Reading from the N-terminus, the 57-residue chain is MARYRHNRSRSRSRHRRRRRGHRGGRYRRRRRRGRYGHRRHHRGHSRRRRKRRRSRH.

Residues Met1–His57 form a disordered region.

The protein belongs to the protamine P1 family. As to expression, testis.

Its subcellular location is the nucleus. The protein localises to the chromosome. Its function is as follows. Protamines substitute for histones in the chromatin of sperm during the haploid phase of spermatogenesis. They compact sperm DNA into a highly condensed, stable and inactive complex. The polypeptide is Sperm protamine P1-type (Alligator mississippiensis (American alligator)).